Here is a 554-residue protein sequence, read N- to C-terminus: MAEAGTGFLEQLKSCIVWSWTYLWTLWFFIMLFLVYILRVPLKINDNLTTVSMFLNTLTPKFYVALTGTSSLISGLILIFEWWYFRKYGTSFIEQVSVSHLRPLLGGVDNSAPSAANAANGEADSSRQSVSECKVWRNPLNLFRGAEYNRYTWVTGREPLTYYDMNLSAQDHQTFFTCDTDHLRPADAIMQKAWRERNPQARISAAHEALELNECATAYILLAEEEATTIVEAEKLFKQALKAGEGCYRRSQQLQHHGAQYEAQHRRDTNVLVYIKRRLAMCARKLGRTREAVKMMRDLMKEFPLLSMFNIHENLLEALLELQAYADVQAVLAKYDDISLPKSATICYTAALLKARAVSDKFSPEAASRRGLSTAEMNAVEAIHRAVEFNPHVPKYLLEMKSLILPPEHILKRGDSEAIAYAFFHLQHWKRVEGALNLLHCTWEGTFRMIPYPLEKGHLFYPYPICTETADRELLPSFHEVSVYPKKELPFFILFTAGLCSFTAMLALLTHQFPELMGVFAKAFLSTLFAPLNFVMEKVESILPSSLWHQLTRI.

Helical transmembrane passes span 15–35 (CIVW…LFLV), 62–82 (FYVA…IFEW), 489–509 (LPFF…LALL), and 516–536 (LMGV…NFVM).

This sequence belongs to the ST7 family.

It is found in the membrane. In Gallus gallus (Chicken), this protein is Suppressor of tumorigenicity 7 protein homolog (ST7).